Reading from the N-terminus, the 135-residue chain is Ribonuclease VapC35 (135 aa).

The PINc domain maps to 2-123 (IYLETSALVK…DNRLKEAAEA (122 aa)). The Mg(2+) site is built by Glu5 and Asp91.

It belongs to the PINc/VapC protein family. It depends on Mg(2+) as a cofactor.

Functionally, toxic component of a type II toxin-antitoxin (TA) system. An RNase. Its toxic effect is neutralized by coexpression with cognate antitoxin VapB35. The chain is Ribonuclease VapC35 from Mycobacterium tuberculosis (strain CDC 1551 / Oshkosh).